We begin with the raw amino-acid sequence, 335 residues long: Vitamin B12 import system permease protein BtuC (335 aa).

9 helical membrane-spanning segments follow: residues 25–45 (LVVI…IWLW), 67–87 (LAVL…QALF), 95–114 (GLLG…VLLG), 118–140 (LPIW…LLLG), 153–173 (LLVG…AVYF), 200–220 (LVLA…VLNF), 243–263 (VLAI…ISFI), 286–306 (CALA…IALF), and 308–328 (AELP…IWLL).

It belongs to the binding-protein-dependent transport system permease family. FecCD subfamily. In terms of assembly, the complex is composed of two ATP-binding proteins (BtuD), two transmembrane proteins (BtuC) and a solute-binding protein (BtuF).

Its subcellular location is the cell inner membrane. Its function is as follows. Part of the ABC transporter complex BtuCDF involved in vitamin B12 import. Involved in the translocation of the substrate across the membrane. This is Vitamin B12 import system permease protein BtuC from Yersinia enterocolitica serotype O:8 / biotype 1B (strain NCTC 13174 / 8081).